The sequence spans 627 residues: Membrane protein insertase YidC (627 aa).

6 helical membrane passes run 3 to 23 (KNTV…SWLN), 376 to 396 (WGLI…PLAY), 450 to 470 (LPML…PTTI), 502 to 522 (FYGN…ILYI), 534 to 554 (EGMA…LFFF), and 558 to 578 (ASGL…QYMS).

The protein belongs to the OXA1/ALB3/YidC family. Type 1 subfamily. In terms of assembly, interacts with the Sec translocase complex via SecD. Specifically interacts with transmembrane segments of nascent integral membrane proteins during membrane integration.

The protein localises to the cell inner membrane. Its function is as follows. Required for the insertion and/or proper folding and/or complex formation of integral membrane proteins into the membrane. Involved in integration of membrane proteins that insert both dependently and independently of the Sec translocase complex, as well as at least some lipoproteins. Aids folding of multispanning membrane proteins. This is Membrane protein insertase YidC from Porphyromonas gingivalis (strain ATCC BAA-308 / W83).